The chain runs to 1720 residues: 6-methylcalicylic acide synthase (1720 aa).

The segment at 1-31 is disordered; that stretch reads MDKQSASGEIPAMRWEPYHRRDPRNAKELSK. In terms of domain architecture, Ketosynthase family 3 (KS3) spans 1–399; that stretch reads MDKQSASGEI…GTVSHAVIEQ (399 aa). Residues 16–30 show a composition bias toward basic and acidic residues; sequence EPYHRRDPRNAKELS. Residues Cys146, His281, and His321 each act as for beta-ketoacyl synthase activity in the active site. The malonyl-CoA:ACP transacylase (MAT) domain stretch occupies residues 509 to 823; that stretch reads VWVFSGHGAQ…IAQLHCRGAE (315 aa). The interval 868–987 is N-terminal hotdog fold; it reads HTLLGQRIGI…AYWARDIQEA (120 aa). A dehydratase (DH) domain region spans residues 868 to 1139; that stretch reads HTLLGQRIGI…FTAMRFSEIE (272 aa). The PKS/mFAS DH domain maps to 868 to 1144; the sequence is HTLLGQRIGI…FSEIEGTPGV (277 aa). Residue His900 is the Proton acceptor; for dehydratase activity of the active site. The tract at residues 1001–1144 is C-terminal hotdog fold; that stretch reads GTRIRDDFSI…FSEIEGTPGV (144 aa). The active-site Proton donor; for dehydratase activity is Asp1065. The segment at 1148-1545 is product template (PT) domain; that stretch reads MESLVHQLAW…AVAVQWTSWR (398 aa). Residues 1644 to 1718 form the Carrier domain; it reads VYLDEKIRGC…HLVGWFAEKV (75 aa). Ser1678 bears the O-(pantetheine 4'-phosphoryl)serine mark.

Its subcellular location is the cytoplasm. The protein localises to the cytosol. It carries out the reaction 3 malonyl-CoA + acetyl-CoA + NADPH + 3 H(+) = 6-methylsalicylate + 3 CO2 + NADP(+) + 4 CoA + H2O. It participates in mycotoxin biosynthesis; patulin biosynthesis. In terms of biological role, 6-methylsalicylic acid synthase; part of the gene cluster that mediates the biosynthesis of patulin, an acetate-derived tetraketide mycotoxin produced by several fungal species that shows antimicrobial properties against several bacteria. PatK catalyzes the first step of the pathway which is the synthesis of 6-methylsalicylic acid via condensation of 1 acetate and 3 malonate units. The pathway begins with the synthesis of 6-methylsalicylic acid by the polyketide synthase (PKS) patK via condensation of acetate and malonate units. The 6-methylsalicylic acid decarboxylase patG then catalyzes the decarboxylation of 6-methylsalicylic acid to yield m-cresol (also known as 3-methylphenol). These first reactions occur in the cytosol. The intermediate m-cresol is then transported into the endoplasmic reticulum where the cytochrome P450 monooxygenase patH converts it to m-hydroxybenzyl alcohol, which is further converted to gentisyl alcohol by the cytochrome P450 monooxygenase patI. The oxidoreductases patJ and patO further convert gentisyl alcohol to isoepoxydon in the vacuole. PatN catalyzes then the transformation of isoepoxydon into phyllostine. The cluster protein patF is responsible for the conversion from phyllostine to neopatulin whereas the alcohol dehydrogenase patD converts neopatulin to E-ascladiol. The steps between isoepoxydon and E-ascladiol occur in the cytosol, and E-ascladiol is probably secreted to the extracellular space by one of the cluster-specific transporters patC or patM. Finally, the secreted patulin synthase patE catalyzes the conversion of E-ascladiol to patulin. This Aspergillus clavatus (strain ATCC 1007 / CBS 513.65 / DSM 816 / NCTC 3887 / NRRL 1 / QM 1276 / 107) protein is 6-methylcalicylic acide synthase.